A 502-amino-acid chain; its full sequence is Probable glycerol kinase (502 aa).

Thr-11 contacts substrate. Arg-15 provides a ligand contact to ATP. Substrate contacts are provided by Arg-85, Tyr-140, and Asp-246. ATP-binding positions include Thr-268, Gly-313, and 416 to 420 (GMIAN).

Belongs to the FGGY kinase family.

It carries out the reaction glycerol + ATP = sn-glycerol 3-phosphate + ADP + H(+). The protein operates within polyol metabolism; glycerol degradation via glycerol kinase pathway; sn-glycerol 3-phosphate from glycerol: step 1/1. This chain is Probable glycerol kinase, found in Caenorhabditis elegans.